The primary structure comprises 524 residues: Cytochrome P450 monooxygenase alt1 (524 aa).

A helical membrane pass occupies residues 24-44 (IANMLSVIAFSICISPIVYFL). Cys-469 contributes to the heme binding site.

It belongs to the cytochrome P450 family. The cofactor is heme.

The protein resides in the membrane. The protein operates within secondary metabolite biosynthesis. Its function is as follows. Cytochrome P450 monooxygenase; part of the gene cluster that mediates the biosynthesis of alternapyrone derivatives. Alternapyrone is a decaketide with octa-methylation from methionine on every C2 unit except the third unit. All the domains in the polyketide synthase alt5 are apparently involved in alternapyrone synthesis, that is, the 8 CMeT, 7 KR, 7 DH, and 4 ER reactions in the 9 KS-mediated condensation steps required for alternapyrone synthesis. the alternapyrone produced by alt5 might be intensively modified by cytochrome P450 monooxygenases alt1, alt2 and alt3 and FAD-dependent oxidoreductase alt4 present in the alt gene cluster. The polypeptide is Cytochrome P450 monooxygenase alt1 (Alternaria solani).